The sequence spans 60 residues: Large ribosomal subunit protein bL32 (60 aa).

Belongs to the bacterial ribosomal protein bL32 family.

The protein is Large ribosomal subunit protein bL32 of Pediococcus pentosaceus (strain ATCC 25745 / CCUG 21536 / LMG 10740 / 183-1w).